The primary structure comprises 177 residues: Large ribosomal subunit protein uL6 (177 aa).

Belongs to the universal ribosomal protein uL6 family. In terms of assembly, part of the 50S ribosomal subunit.

Its function is as follows. This protein binds to the 23S rRNA, and is important in its secondary structure. It is located near the subunit interface in the base of the L7/L12 stalk, and near the tRNA binding site of the peptidyltransferase center. The chain is Large ribosomal subunit protein uL6 from Vibrio cholerae serotype O1 (strain ATCC 39541 / Classical Ogawa 395 / O395).